A 212-amino-acid polypeptide reads, in one-letter code: N-(5'-phosphoribosyl)anthranilate isomerase (212 aa).

This sequence belongs to the TrpF family.

The catalysed reaction is N-(5-phospho-beta-D-ribosyl)anthranilate = 1-(2-carboxyphenylamino)-1-deoxy-D-ribulose 5-phosphate. It functions in the pathway amino-acid biosynthesis; L-tryptophan biosynthesis; L-tryptophan from chorismate: step 3/5. The protein is N-(5'-phosphoribosyl)anthranilate isomerase of Microcystis aeruginosa (strain NIES-843 / IAM M-2473).